The sequence spans 308 residues: MDWKGRDVISIRDFSKEDIETVLATAERLERELKEKGQLEYAKGKILATLFFEPSTRTRLSFESAMHRLGGAVIGFAEASTSSVKKGESLRDTIKTVEQYCDVIVIRHPKEGAARLAAEVAEVPVINAGDGSNQHPTQTLLDLYTIKKEFGRIDGLKIGLLGDLKYGRTVHSLAEALTFYDVELYLISPELLRMPRHIVEELREKGMKVVETTTLEDVIGKLDVLYVTRIQKERFPDEQEYLKVKGSYQVNLKVLEKAKDELRIMHPLPRVDEIHPEVDNTKHAIYFRQVFNGVPVRMALLALVLGVI.

Carbamoyl phosphate is bound by residues arginine 57 and threonine 58. Lysine 86 contacts L-aspartate. 3 residues coordinate carbamoyl phosphate: arginine 107, histidine 135, and glutamine 138. Residues arginine 168 and arginine 229 each contribute to the L-aspartate site. Carbamoyl phosphate is bound by residues leucine 268 and proline 269.

The protein belongs to the aspartate/ornithine carbamoyltransferase superfamily. ATCase family. Heterooligomer of catalytic and regulatory chains.

The catalysed reaction is carbamoyl phosphate + L-aspartate = N-carbamoyl-L-aspartate + phosphate + H(+). Its pathway is pyrimidine metabolism; UMP biosynthesis via de novo pathway; (S)-dihydroorotate from bicarbonate: step 2/3. Catalyzes the condensation of carbamoyl phosphate and aspartate to form carbamoyl aspartate and inorganic phosphate, the committed step in the de novo pyrimidine nucleotide biosynthesis pathway. The sequence is that of Aspartate carbamoyltransferase catalytic subunit from Pyrococcus abyssi (strain GE5 / Orsay).